A 62-amino-acid chain; its full sequence is Large ribosomal subunit protein bL28 (62 aa).

Positions 1–28 are disordered; the sequence is MARKCVITGRKSRSGNSRSHAMNASKRT. Over residues 14 to 26 the composition is skewed to polar residues; sequence SGNSRSHAMNASK.

It belongs to the bacterial ribosomal protein bL28 family.

The polypeptide is Large ribosomal subunit protein bL28 (Bacillus licheniformis (strain ATCC 14580 / DSM 13 / JCM 2505 / CCUG 7422 / NBRC 12200 / NCIMB 9375 / NCTC 10341 / NRRL NRS-1264 / Gibson 46)).